Consider the following 131-residue polypeptide: Large ribosomal subunit protein eL32 (131 aa).

It belongs to the eukaryotic ribosomal protein eL32 family.

This Sulfurisphaera tokodaii (strain DSM 16993 / JCM 10545 / NBRC 100140 / 7) (Sulfolobus tokodaii) protein is Large ribosomal subunit protein eL32 (rpl32e).